The primary structure comprises 825 residues: MSGWRKIYYKLLNLPLKLLVKSKVIPADPVSELGLDPSRPILYVLPYNSKADLLTLRAQCLAQDLPDPLIPLEIDGVQLPSHVFIENGPRVFRYYVPKQESVKLFHDYLDLHRNNPALDIQMLPVSVMFGRSPGREGHGTPHLRVLNGVQKFFAVLWLGRDSFVRFSTTVSLRRMASEHGTDKTIAHKLARVARMHFSRQRLAAVGPSLPARQDLFKKLLASKAIEKAVADEARSKKISHEKAQQNAITLMEEIAANFSYEAVRLSDRVLSWTWNRLYQGINVHNAERVRQLAQDGHEIVYVPCHRSHMDYLLLSYVLYHQGLVPPHIAAGINLNFWPAGPIFRRLGAFFIRRTFKGNKLYSTVFREYLGELFTRGYSVEYFVEGGRSRTGRLLEPKTGTLSMTIQAMLRGGTRPITLVPIYIGYEHVMEVGTYAKELRGAIKEKENLLQMLRGLRKLRNLGQGYVNFGEPLPLTTYLNTHVPQWRDAIDPIEAQRPSWLTPAVNDLANQIMVRINNAAAANAMNLCSTALLASRQRSLTREQLLEQLDCYLQLMRNAPYAKDTTVPDKTPEELLNHALNMNKFEVEKDTIGDIIILPREQAVLMTYYRNNIQHLLILPSLIASMVMYHRRITRTELLHKISMIYPMLKAELFLHYSKEQLPETLDTLIDELARQQLICDKGSELVLNPARIRPLQLLAAGVRETLQRYAITLSLLSATPSINRGALEKESRIMAQRLSVLHGINAPEFFDKAVFSTLVATLREEGYISDSGDAIQEHTLEVYNMLSALMTPEVKLTIESVSMPAETSNQPEAPETPEPEGKTES.

The HXXXXD motif motif lies at 304 to 309 (CHRSHM). The segment at 803 to 825 (MPAETSNQPEAPETPEPEGKTES) is disordered.

This sequence belongs to the GPAT/DAPAT family.

It is found in the cell inner membrane. The catalysed reaction is sn-glycerol 3-phosphate + an acyl-CoA = a 1-acyl-sn-glycero-3-phosphate + CoA. It functions in the pathway phospholipid metabolism; CDP-diacylglycerol biosynthesis; CDP-diacylglycerol from sn-glycerol 3-phosphate: step 1/3. The sequence is that of Glycerol-3-phosphate acyltransferase from Yersinia pseudotuberculosis serotype O:1b (strain IP 31758).